Here is a 670-residue protein sequence, read N- to C-terminus: DNA ligase (670 aa).

Residues 32 to 36 (DAEYD), 81 to 82 (SL), and Glu113 each bind NAD(+). Residue Lys115 is the N6-AMP-lysine intermediate of the active site. Arg136, Glu173, Lys290, and Lys314 together coordinate NAD(+). The Zn(2+) site is built by Cys406, Cys409, Cys424, and Cys430. Residues 592 to 670 (EIDSPFAGKT…EQEMMRLLGE (79 aa)) form the BRCT domain.

It belongs to the NAD-dependent DNA ligase family. LigA subfamily. Mg(2+) serves as cofactor. The cofactor is Mn(2+).

The enzyme catalyses NAD(+) + (deoxyribonucleotide)n-3'-hydroxyl + 5'-phospho-(deoxyribonucleotide)m = (deoxyribonucleotide)n+m + AMP + beta-nicotinamide D-nucleotide.. Functionally, DNA ligase that catalyzes the formation of phosphodiester linkages between 5'-phosphoryl and 3'-hydroxyl groups in double-stranded DNA using NAD as a coenzyme and as the energy source for the reaction. It is essential for DNA replication and repair of damaged DNA. The protein is DNA ligase of Erwinia tasmaniensis (strain DSM 17950 / CFBP 7177 / CIP 109463 / NCPPB 4357 / Et1/99).